Here is a 269-residue protein sequence, read N- to C-terminus: Regulatory protein RecX (269 aa).

It belongs to the RecX family.

It is found in the cytoplasm. In terms of biological role, modulates RecA activity. The protein is Regulatory protein RecX of Geobacillus thermodenitrificans (strain NG80-2).